The sequence spans 334 residues: Putative 2-hydroxyacid dehydrogenase UNK4.10 (334 aa).

NAD(+) is bound by residues 166-167 (GI), 244-246 (TAR), and Asp270. The active site involves Arg246. Glu275 is a catalytic residue. The active-site Proton donor is His293. Residue 293 to 296 (HLGT) participates in NAD(+) binding.

Belongs to the D-isomer specific 2-hydroxyacid dehydrogenase family.

The polypeptide is Putative 2-hydroxyacid dehydrogenase UNK4.10 (Schizosaccharomyces pombe (strain 972 / ATCC 24843) (Fission yeast)).